The chain runs to 308 residues: RNA pseudouridylate synthase domain-containing protein 1 (308 aa).

Met-1 is subject to N-acetylmethionine. Residue Asp-67 is part of the active site. The tract at residues 257-292 is disordered; sequence APDPDPSEGGPGPCSPCTPLPGPGRPPPPPETEVQR. The span at 269-287 shows a compositional bias: pro residues; it reads PCSPCTPLPGPGRPPPPPE.

It belongs to the pseudouridine synthase RluA family.

The polypeptide is RNA pseudouridylate synthase domain-containing protein 1 (RPUSD1) (Bos taurus (Bovine)).